Here is a 522-residue protein sequence, read N- to C-terminus: Secreted RxLR effector protein 105 (522 aa).

The N-terminal stretch at 1–21 is a signal peptide; that stretch reads MRGPCSVITALLVVASSQIAA. The RxLR-dEER signature appears at 48 to 63; the sequence is RYLRGSQHVLDSNEER.

It belongs to the RxLR effector family.

It localises to the secreted. The protein localises to the host nucleus. Its subcellular location is the host cytoplasm. Its function is as follows. Secreted effector that dos not suppress the host cell death induced by cell death-inducing proteins. The polypeptide is Secreted RxLR effector protein 105 (Plasmopara viticola (Downy mildew of grapevine)).